Here is a 128-residue protein sequence, read N- to C-terminus: Fluoride-specific ion channel FluC (128 aa).

The next 4 helical transmembrane spans lie at 10–30 (FLAV…AGLW), 40–60 (TLLV…VLLA), 71–91 (AAVT…AETV), and 102–122 (ALGY…LGLA). Positions 78 and 81 each coordinate Na(+).

Belongs to the fluoride channel Fluc/FEX (TC 1.A.43) family.

Its subcellular location is the cell inner membrane. It catalyses the reaction fluoride(in) = fluoride(out). Its activity is regulated as follows. Na(+) is not transported, but it plays an essential structural role and its presence is essential for fluoride channel function. In terms of biological role, fluoride-specific ion channel. Important for reducing fluoride concentration in the cell, thus reducing its toxicity. This Bordetella petrii (strain ATCC BAA-461 / DSM 12804 / CCUG 43448) protein is Fluoride-specific ion channel FluC.